Here is a 115-residue protein sequence, read N- to C-terminus: MNLIMTLFINITLTSLLVLIAFWLPQLNIYTEKTSPYECGFDPMGSARMPFSMKFFLVAITFLLFDLEIALLLPLPWATQTVNLTTMLTTALLLISLLAVSLAYEWTEKGLEWTE.

Helical transmembrane passes span 3 to 23 (LIMT…IAFW), 55 to 75 (FFLV…LLPL), and 84 to 104 (LTTM…SLAY).

It belongs to the complex I subunit 3 family. In terms of assembly, core subunit of respiratory chain NADH dehydrogenase (Complex I) which is composed of 45 different subunits. Interacts with TMEM186. Interacts with TMEM242.

It localises to the mitochondrion inner membrane. The enzyme catalyses a ubiquinone + NADH + 5 H(+)(in) = a ubiquinol + NAD(+) + 4 H(+)(out). Its function is as follows. Core subunit of the mitochondrial membrane respiratory chain NADH dehydrogenase (Complex I) which catalyzes electron transfer from NADH through the respiratory chain, using ubiquinone as an electron acceptor. Essential for the catalytic activity of complex I. This chain is NADH-ubiquinone oxidoreductase chain 3, found in Ailurus fulgens (Himalayan red panda).